The primary structure comprises 425 residues: Enolase (425 aa).

Residue Gln163 coordinates (2R)-2-phosphoglycerate. The Proton donor role is filled by Glu205. Mg(2+) contacts are provided by Asp242, Glu285, and Asp312. Positions 337, 366, 367, and 388 each coordinate (2R)-2-phosphoglycerate. Lys337 functions as the Proton acceptor in the catalytic mechanism.

The protein belongs to the enolase family. The cofactor is Mg(2+).

Its subcellular location is the cytoplasm. It is found in the secreted. The protein localises to the cell surface. The catalysed reaction is (2R)-2-phosphoglycerate = phosphoenolpyruvate + H2O. It participates in carbohydrate degradation; glycolysis; pyruvate from D-glyceraldehyde 3-phosphate: step 4/5. In terms of biological role, catalyzes the reversible conversion of 2-phosphoglycerate (2-PG) into phosphoenolpyruvate (PEP). It is essential for the degradation of carbohydrates via glycolysis. The protein is Enolase of Paracoccus denitrificans (strain Pd 1222).